Consider the following 157-residue polypeptide: Thiocyanate hydrolase subunit beta (157 aa).

As to quaternary structure, heterododecamer consisting of 4 alpha, 4 beta, and 4 gamma subunits.

It carries out the reaction thiocyanate + H2O + 2 H(+) = carbonyl sulfide + NH4(+). Its pathway is organosulfur degradation; thiocyanate degradation. In terms of biological role, involved in the degradation of thiocyanate. This Thiobacillus thioparus protein is Thiocyanate hydrolase subunit beta (scnB).